Consider the following 103-residue polypeptide: Putative sulfurtransferase YtwF (103 aa).

Residues 17-100 (ADEELYLIDV…GMMAWEGETK (84 aa)) enclose the Rhodanese domain. Cysteine 65 acts as the Cysteine persulfide intermediate in catalysis.

This chain is Putative sulfurtransferase YtwF (ytwF), found in Bacillus subtilis (strain 168).